Consider the following 227-residue polypeptide: NADH-quinone oxidoreductase subunit C (227 aa).

This sequence belongs to the complex I 30 kDa subunit family. NDH-1 is composed of 14 different subunits. Subunits NuoB, C, D, E, F, and G constitute the peripheral sector of the complex.

Its subcellular location is the cell inner membrane. The catalysed reaction is a quinone + NADH + 5 H(+)(in) = a quinol + NAD(+) + 4 H(+)(out). NDH-1 shuttles electrons from NADH, via FMN and iron-sulfur (Fe-S) centers, to quinones in the respiratory chain. The immediate electron acceptor for the enzyme in this species is believed to be ubiquinone. Couples the redox reaction to proton translocation (for every two electrons transferred, four hydrogen ions are translocated across the cytoplasmic membrane), and thus conserves the redox energy in a proton gradient. The protein is NADH-quinone oxidoreductase subunit C of Legionella pneumophila (strain Paris).